Here is a 212-residue protein sequence, read N- to C-terminus: Fibroblast growth factor 8b (212 aa).

The first 27 residues, 1–27, serve as a signal peptide directing secretion; the sequence is MRLKSSRLGYLFLQFMTLCFYTQMTMQ. The N-linked (GlcNAc...) asparagine glycan is linked to Asn139.

It belongs to the heparin-binding growth factors family.

It is found in the secreted. In terms of biological role, may act as signaling molecule during development of the midbrain-hindbrain boundary (MHB) organizer, and be involved in patterning of the nervous system. The sequence is that of Fibroblast growth factor 8b (fgf8b) from Danio rerio (Zebrafish).